We begin with the raw amino-acid sequence, 521 residues long: Probable rhamnogalacturonase B (521 aa).

The signal sequence occupies residues methionine 1–alanine 21. A disulfide bridge connects residues cysteine 42 and cysteine 68. Asparagine 145 carries an N-linked (GlcNAc...) asparagine glycan. Aspartate 219 functions as the Proton donor in the catalytic mechanism. Cysteines 221 and 238 form a disulfide. An N-linked (GlcNAc...) asparagine glycan is attached at asparagine 239. Histidine 294 is a catalytic residue. Asparagine 321 carries an N-linked (GlcNAc...) asparagine glycan. 2 cysteine pairs are disulfide-bonded: cysteine 344-cysteine 350 and cysteine 372-cysteine 381. The disordered stretch occupies residues glutamate 462–isoleucine 521. A compositionally biased stretch (polar residues) spans arginine 469–proline 486. The segment covering proline 507 to isoleucine 521 has biased composition (basic residues).

Belongs to the glycosyl hydrolase 28 family.

Its subcellular location is the secreted. It catalyses the reaction Endohydrolysis of alpha-D-GalA-(1-&gt;2)-alpha-L-Rha glycosidic bond in the rhamnogalacturonan I backbone with initial inversion of anomeric configuration releasing oligosaccharides with beta-D-GalA at the reducing end.. In terms of biological role, pectinolytic enzymes consist of four classes of enzymes: pectine lyase, polygalacturonase, pectin methylesterase and rhamnogalacturonase. Hydrolyzes alpha-D-galacturonopyranosyl-(1,2)-alpha-L-rhamnopyranosyl linkages in the backbone of the hairy regions of pectins. The protein is Probable rhamnogalacturonase B (rhgB) of Aspergillus fumigatus (strain ATCC MYA-4609 / CBS 101355 / FGSC A1100 / Af293) (Neosartorya fumigata).